We begin with the raw amino-acid sequence, 83 residues long: Mitochondrial import inner membrane translocase subunit Tim8 B (83 aa).

Ala2 carries the N-acetylalanine modification. Positions 36–59 (CWDKCVEKPGNRLDSRTENCLSSC) match the Twin CX3C motif motif. Disulfide bonds link Cys36–Cys59 and Cys40–Cys55.

Belongs to the small Tim family. In terms of assembly, heterohexamer; possibly composed of 3 copies of TIMM8B and 3 copies of TIMM13, named soluble 70 kDa complex. Associates with the TIM22 complex, whose core is composed of TIMM22. As to expression, ubiquitous, with highest expression in heart, kidney, liver and skeletal muscle.

Its subcellular location is the mitochondrion inner membrane. Probable mitochondrial intermembrane chaperone that participates in the import and insertion of some multi-pass transmembrane proteins into the mitochondrial inner membrane. Also required for the transfer of beta-barrel precursors from the TOM complex to the sorting and assembly machinery (SAM complex) of the outer membrane. Acts as a chaperone-like protein that protects the hydrophobic precursors from aggregation and guide them through the mitochondrial intermembrane space. The polypeptide is Mitochondrial import inner membrane translocase subunit Tim8 B (TIMM8B) (Homo sapiens (Human)).